Here is a 585-residue protein sequence, read N- to C-terminus: Frizzled-5 (585 aa).

Positions 1-26 are cleaved as a signal peptide; it reads MARPDPSAPPSLLLLLLAQLVGRAAA. Topologically, residues 27–238 are extracellular; sequence ASKAPVCQEI…PDERTFATFW (212 aa). Residues 28–150 form the FZ domain; that stretch reads SKAPVCQEIT…GDAEVLCMDY (123 aa). 5 cysteine pairs are disulfide-bonded: Cys-33–Cys-94, Cys-41–Cys-87, Cys-78–Cys-116, Cys-105–Cys-147, and Cys-109–Cys-133. N-linked (GlcNAc...) asparagine glycosylation occurs at Asn-47. Residue Asn-151 is glycosylated (N-linked (GlcNAc...) asparagine). The tract at residues 156–182 is disordered; sequence TTASPKSFPAKPTLPGPPGAPSSGGEC. A helical transmembrane segment spans residues 239 to 259; that stretch reads IGLWSVLCFISTSTTVATFLI. Residues 260–270 lie on the Cytoplasmic side of the membrane; it reads DMERFRYPERP. A helical membrane pass occupies residues 271-291; that stretch reads IIFLSACYLCVSLGFLVRLVV. Residues 292 to 315 are Extracellular-facing; sequence GHASVACSREHSHIHYETTGPALC. Residues 316-336 traverse the membrane as a helical segment; the sequence is TVVFLLVYFFGMASSIWWVIL. Residues 337-358 lie on the Cytoplasmic side of the membrane; the sequence is SLTWFLAAGMKWGNEAIAGYAQ. A helical membrane pass occupies residues 359–379; the sequence is YFHLAAWLIPSVKSITALALS. Over 380–402 the chain is Extracellular; it reads SVDGDPVAGVCYVGNQNLNSLRG. Residues 403–423 traverse the membrane as a helical segment; sequence FVLGPLVLYLLVGTLFLLAGF. At 424–449 the chain is on the cytoplasmic side; that stretch reads VSLFRIRSVIKQGGTKTDKLEKLMIR. The chain crosses the membrane as a helical span at residues 450–470; sequence IGIFTLLYTVPASIVVACYLY. At 471–500 the chain is on the extracellular side; it reads EQHYRESWEAALTCACPGSDAGQPRAKPEY. Residues 501–521 traverse the membrane as a helical segment; the sequence is WVLMLKYFMCLVVGITSGVWI. The Cytoplasmic segment spans residues 522 to 585; sequence WSGKTLESWR…YHKQVSLSHV (64 aa). The Lys-Thr-X-X-X-Trp motif, mediates interaction with the PDZ domain of Dvl family members motif lies at 525–530; sequence KTLESW. The PDZ-binding signature appears at 583–585; it reads SHV.

It belongs to the G-protein coupled receptor Fz/Smo family. Binding of unsaturated fatty acid molecules (via FZ domain) promotes homodimerization (via FZ domain). Interacts with WNT2B. Interacts with WNT7A. Interacts with GOPC. Post-translationally, ubiquitinated by RNF43 and ZNRF3, leading to its degradation by the proteasome.

The protein localises to the cell membrane. Its subcellular location is the golgi apparatus membrane. It is found in the synapse. The protein resides in the perikaryon. It localises to the cell projection. The protein localises to the dendrite. Its subcellular location is the axon. Receptor for Wnt proteins. Functions in the canonical Wnt/beta-catenin signaling pathway. In vitro activates WNT2, WNT10B, WNT5A, but not WNT2B or WNT4 signaling. In neurons, activation by WNT7A promotes formation of synapses. May be involved in transduction and intercellular transmission of polarity information during tissue morphogenesis and/or in differentiated tissues. Plays a role in yolk sac angiogenesis and in placental vascularization. Plays a role in ocular development. The protein is Frizzled-5 (Fzd5) of Rattus norvegicus (Rat).